The primary structure comprises 258 residues: D-beta-hydroxybutyrate dehydrogenase (258 aa).

Residue 8 to 32 coordinates NAD(+); that stretch reads LVTGSTSGIGLGIAKALAAQGANII. Ser-140 contributes to the substrate binding site. The Proton acceptor role is filled by Tyr-153.

It belongs to the short-chain dehydrogenases/reductases (SDR) family.

It carries out the reaction (R)-3-hydroxybutanoate + NAD(+) = acetoacetate + NADH + H(+). This chain is D-beta-hydroxybutyrate dehydrogenase (hbdH1), found in Cupriavidus necator (strain ATCC 17699 / DSM 428 / KCTC 22496 / NCIMB 10442 / H16 / Stanier 337) (Ralstonia eutropha).